A 701-amino-acid polypeptide reads, in one-letter code: Elongation factor G (701 aa).

A tr-type G domain is found at 8-286; it reads ERIRNIGIIA…AIVHYLPSPV (279 aa). GTP-binding positions include 17–24, 85–89, and 139–142; these read AHIDAGKT, DTPGH, and NKMD.

This sequence belongs to the TRAFAC class translation factor GTPase superfamily. Classic translation factor GTPase family. EF-G/EF-2 subfamily.

It localises to the cytoplasm. Its function is as follows. Catalyzes the GTP-dependent ribosomal translocation step during translation elongation. During this step, the ribosome changes from the pre-translocational (PRE) to the post-translocational (POST) state as the newly formed A-site-bound peptidyl-tRNA and P-site-bound deacylated tRNA move to the P and E sites, respectively. Catalyzes the coordinated movement of the two tRNA molecules, the mRNA and conformational changes in the ribosome. This Roseiflexus sp. (strain RS-1) protein is Elongation factor G.